A 293-amino-acid polypeptide reads, in one-letter code: 4-diphosphocytidyl-2-C-methyl-D-erythritol kinase (293 aa).

K16 is a catalytic residue. Residue 99–109 (PMGAGLGGGSS) participates in ATP binding. The active site involves D141.

Belongs to the GHMP kinase family. IspE subfamily.

It carries out the reaction 4-CDP-2-C-methyl-D-erythritol + ATP = 4-CDP-2-C-methyl-D-erythritol 2-phosphate + ADP + H(+). The protein operates within isoprenoid biosynthesis; isopentenyl diphosphate biosynthesis via DXP pathway; isopentenyl diphosphate from 1-deoxy-D-xylulose 5-phosphate: step 3/6. In terms of biological role, catalyzes the phosphorylation of the position 2 hydroxy group of 4-diphosphocytidyl-2C-methyl-D-erythritol. In Burkholderia cenocepacia (strain HI2424), this protein is 4-diphosphocytidyl-2-C-methyl-D-erythritol kinase.